The primary structure comprises 292 residues: MLKKYLFLTKPGILFGNFITTLGGFFLAAQGSIDILLLLLTLIGTTLVVASGCVVNNVIDQDIDTKMQRTQNRALVKKTISPTVALVYAFVLGVMGFSILWFGVNGYAFLFAMIGFIVYVGFYSLWTKRTSIHQTVIGSISGASPPVIGYTAVTHQFDVAALLLFLAYALWQMPHSWAIAIYRFDDYKNAGIPILPVARSIYRTKIECVIYILLFAAVLNGLYCFGYTNVFFLITFNALTAYWFYLSIIGFKAENDQLWAKRFFLYSVILITLLSLSFSFTYQSPAPNLPLF.

Transmembrane regions (helical) follow at residues 13–33, 35–55, 84–104, 106–126, 135–155, 161–181, 206–226, 231–251, and 263–283; these read ILFG…QGSI, ILLL…GCVV, VALV…WFGV, GYAF…YSLW, TVIG…AVTH, ALLL…AIAI, IECV…YCFG, FFLI…IIGF, and FFLY…FTYQ.

The protein belongs to the UbiA prenyltransferase family. Protoheme IX farnesyltransferase subfamily.

The protein resides in the cell inner membrane. It carries out the reaction heme b + (2E,6E)-farnesyl diphosphate + H2O = Fe(II)-heme o + diphosphate. It functions in the pathway porphyrin-containing compound metabolism; heme O biosynthesis; heme O from protoheme: step 1/1. Functionally, converts heme B (protoheme IX) to heme O by substitution of the vinyl group on carbon 2 of heme B porphyrin ring with a hydroxyethyl farnesyl side group. The protein is Protoheme IX farnesyltransferase of Acinetobacter baumannii (strain AB307-0294).